Here is a 449-residue protein sequence, read N- to C-terminus: Interferon-related developmental regulator 1 (449 aa).

A compositionally biased stretch (basic residues) spans 1–10 (MPKNKKRNAP). The disordered stretch occupies residues 1 to 41 (MPKNKKRNAPHRGGGGGGGSGAATSAATTGGPHRTVQPFSD). A compositionally biased stretch (gly residues) spans 12–21 (RGGGGGGGSG). Low complexity predominate over residues 22-31 (AATSAATTGG).

This sequence belongs to the IFRD family. In terms of assembly, interacts with PSIP1/LEDGF. In terms of tissue distribution, expressed at high levels in the embryonic brain in the period related to neuroblast proliferation and differentiation.

Its subcellular location is the cytoplasm. The protein resides in the cell membrane. The protein localises to the nucleus. Functionally, probably participates in neurogenesis. Could play a role in regulating gene activity in the proliferative and/or differentiative pathways induced by NGF. The protein is Interferon-related developmental regulator 1 (Ifrd1) of Rattus norvegicus (Rat).